The primary structure comprises 414 residues: Serine hydroxymethyltransferase (414 aa).

(6S)-5,6,7,8-tetrahydrofolate is bound by residues Leu-121 and 125–127 (GHL). Lys-229 is subject to N6-(pyridoxal phosphate)lysine.

This sequence belongs to the SHMT family. As to quaternary structure, homodimer. Requires pyridoxal 5'-phosphate as cofactor.

Its subcellular location is the cytoplasm. It carries out the reaction (6R)-5,10-methylene-5,6,7,8-tetrahydrofolate + glycine + H2O = (6S)-5,6,7,8-tetrahydrofolate + L-serine. The protein operates within one-carbon metabolism; tetrahydrofolate interconversion. It participates in amino-acid biosynthesis; glycine biosynthesis; glycine from L-serine: step 1/1. Its function is as follows. Catalyzes the reversible interconversion of serine and glycine with tetrahydrofolate (THF) serving as the one-carbon carrier. This reaction serves as the major source of one-carbon groups required for the biosynthesis of purines, thymidylate, methionine, and other important biomolecules. Also exhibits THF-independent aldolase activity toward beta-hydroxyamino acids, producing glycine and aldehydes, via a retro-aldol mechanism. The chain is Serine hydroxymethyltransferase from Verminephrobacter eiseniae (strain EF01-2).